The following is a 204-amino-acid chain: Protein-L-isoaspartate O-methyltransferase (204 aa).

The protein belongs to the methyltransferase superfamily. L-isoaspartyl/D-aspartyl protein methyltransferase family. Monomer.

It localises to the cytoplasm. The enzyme catalyses [protein]-L-isoaspartate + S-adenosyl-L-methionine = [protein]-L-isoaspartate alpha-methyl ester + S-adenosyl-L-homocysteine. Its function is as follows. Catalyzes the methyl esterification of L-isoaspartyl residues in peptides and proteins that result from spontaneous decomposition of normal L-aspartyl and L-asparaginyl residues. It plays a role in the repair and/or degradation of damaged proteins. The polypeptide is Protein-L-isoaspartate O-methyltransferase (pcm) (Rhizobium meliloti (strain 1021) (Ensifer meliloti)).